The primary structure comprises 316 residues: tRNA uridine(34) hydroxylase (316 aa).

Residues 123–217 form the Rhodanese domain; the sequence is LSDDTVVIDA…YGKDPETKGE (95 aa). Residue C177 is the Cysteine persulfide intermediate of the active site.

The protein belongs to the TrhO family.

It catalyses the reaction uridine(34) in tRNA + AH2 + O2 = 5-hydroxyuridine(34) in tRNA + A + H2O. Catalyzes oxygen-dependent 5-hydroxyuridine (ho5U) modification at position 34 in tRNAs. This is tRNA uridine(34) hydroxylase from Staphylococcus saprophyticus subsp. saprophyticus (strain ATCC 15305 / DSM 20229 / NCIMB 8711 / NCTC 7292 / S-41).